Reading from the N-terminus, the 91-residue chain is Probable Fe(2+)-trafficking protein (91 aa).

The protein belongs to the Fe(2+)-trafficking protein family. As to quaternary structure, monomer.

In terms of biological role, could be a mediator in iron transactions between iron acquisition and iron-requiring processes, such as synthesis and/or repair of Fe-S clusters in biosynthetic enzymes. This is Probable Fe(2+)-trafficking protein from Klebsiella pneumoniae (strain 342).